Consider the following 134-residue polypeptide: Cytochrome b (134 aa).

Transmembrane regions (helical) follow at residues 33 to 53 (FGSLLGVCLGVQILTGLFLAM), 77 to 98 (WLLRYLHANGASMFFICLYLHV), and 113 to 133 (WNIGILLLFAVMATDFMGYVL). The heme b site is built by His83 and His97.

The protein belongs to the cytochrome b family. In terms of assembly, the cytochrome bc1 complex contains 11 subunits: 3 respiratory subunits (MT-CYB, CYC1 and UQCRFS1), 2 core proteins (UQCRC1 and UQCRC2) and 6 low-molecular weight proteins (UQCRH/QCR6, UQCRB/QCR7, UQCRQ/QCR8, UQCR10/QCR9, UQCR11/QCR10 and a cleavage product of UQCRFS1). This cytochrome bc1 complex then forms a dimer. Requires heme b as cofactor.

The protein resides in the mitochondrion inner membrane. Component of the ubiquinol-cytochrome c reductase complex (complex III or cytochrome b-c1 complex) that is part of the mitochondrial respiratory chain. The b-c1 complex mediates electron transfer from ubiquinol to cytochrome c. Contributes to the generation of a proton gradient across the mitochondrial membrane that is then used for ATP synthesis. This chain is Cytochrome b (MT-CYB), found in Sturnira tildae (Tilda's yellow-shouldered bat).